A 469-amino-acid polypeptide reads, in one-letter code: Diacetylchitobiose binding protein NgcE (469 aa).

The tat-type signal signal peptide spans 1 to 37; the sequence is MTIRAGSLDRRTLLRGAIATAAMGSFAVACSSPSSED. A disordered region spans residues 30 to 54; sequence CSSPSSEDKESDSGPKGEKSANNPF. Over residues 35-48 the composition is skewed to basic and acidic residues; it reads SEDKESDSGPKGEK.

Belongs to the bacterial solute-binding protein 1 family. As to quaternary structure, the complex is composed of two ATP-binding proteins (MsiK), two transmembrane proteins (NgcF and NgcG) and a solute-binding protein (NgcE). Post-translationally, predicted to be exported by the Tat system. The position of the signal peptide cleavage has not been experimentally proven.

Its subcellular location is the cell membrane. Functionally, part of the ABC transporter complex NgcEFG-MsiK involved in N,N'-diacetylchitobiose ((GlcNAc)2) uptake. Binds (GlcNAc)2. Can also bind GlcNAc. The protein is Diacetylchitobiose binding protein NgcE of Streptomyces coelicolor (strain ATCC BAA-471 / A3(2) / M145).